Reading from the N-terminus, the 316-residue chain is Pantothenate kinase (316 aa).

95 to 102 (GSVAVGKS) lines the ATP pocket.

This sequence belongs to the prokaryotic pantothenate kinase family.

The protein localises to the cytoplasm. The catalysed reaction is (R)-pantothenate + ATP = (R)-4'-phosphopantothenate + ADP + H(+). It participates in cofactor biosynthesis; coenzyme A biosynthesis; CoA from (R)-pantothenate: step 1/5. This chain is Pantothenate kinase, found in Shewanella baltica (strain OS195).